The primary structure comprises 394 residues: HORMA domain-containing protein 1 (394 aa).

An HORMA domain is found at 24–226 (QQSLVLVKRL…TPFHTFKVKV (203 aa)). Residues 306 to 394 (KESPELSISH…RKFSEPKEHI (89 aa)) form a disordered region. The segment covering 311–325 (LSISHSQVEQLVSKT) has biased composition (polar residues). Positions 353–362 (KSKESRKRSQ) are enriched in basic and acidic residues. Residue S376 is modified to Phosphoserine. A Nuclear localization signal motif is present at residues 383-386 (KRRK).

In terms of assembly, interacts with HORMAD2. Interacts with IHO1. Post-translationally, phosphorylated at Ser-377 in a SPO11-dependent manner.

Its subcellular location is the nucleus. The protein localises to the chromosome. Plays a key role in meiotic progression. Regulates 3 different functions during meiosis: ensures that sufficient numbers of processed DNA double-strand breaks (DSBs) are available for successful homology search by increasing the steady-state numbers of single-stranded DSB ends. Promotes synaptonemal-complex formation independently of its role in homology search. Plays a key role in the male mid-pachytene checkpoint and the female meiotic prophase checkpoint: required for efficient build-up of ATR activity on unsynapsed chromosome regions, a process believed to form the basis of meiotic silencing of unsynapsed chromatin (MSUC) and meiotic prophase quality control in both sexes. The chain is HORMA domain-containing protein 1 (HORMAD1) from Sus scrofa (Pig).